A 473-amino-acid chain; its full sequence is JmjC domain-containing protein 4 (473 aa).

One can recognise a JmjC domain in the interval 140-433 (PTDGLLTDFS…DFDHPYLDRN (294 aa)). The disordered stretch occupies residues 452–473 (TNKKNEKRPAEDDSPSQKKTCQ).

It is found in the nucleus. Its function is as follows. Has a role in meiosis. This is JmjC domain-containing protein 4 (jmj4) from Schizosaccharomyces pombe (strain 972 / ATCC 24843) (Fission yeast).